Reading from the N-terminus, the 742-residue chain is Feeding circuit activating peptides (742 aa).

The signal sequence occupies residues 1–22 (MTFAASFRALLCVLFCAALVHC). A propeptide spanning residues 23–98 (KTRTKRYVPH…YGALADRDVD (76 aa)) is cleaved from the precursor. The propeptide at 117-131 (GSLDAIPQDTDASSD) is connecting peptide. 20 propeptides span residues 164-168 (GSGAE), 202-220 (RGTG…PWGS), 236-253 (DTEL…TEVN), 271-275 (SGEAG), 293-297 (ADDQG), 315-321 (FDNSAGE), 339-341 (AGD), 359-366 (FDNDISGQ), 384-388 (SDQDN), 406-410 (ADDDG), 428-432 (ADEDD), 450-454 (GDEDD), 472-476 (ADEDD), 494-498 (SDEDD), 516-520 (SDEDD), 538-542 (ADEDD), 560-564 (NSPGL), 582-592 (NNEYYSGAENE), 610-614 (DQPGE), and 647-742 (NSAD…AGQM).

In terms of tissue distribution, expressed in pleural, pedal, abdominal, buccal and cerebral ganglia.

It localises to the secreted. In terms of biological role, initiates organized rhythmic motor output of feeding circuit. In Aplysia californica (California sea hare), this protein is Feeding circuit activating peptides.